The primary structure comprises 399 residues: F-box protein At1g30790 (399 aa).

The region spanning 3 to 49 (RQEIDHIPFDLTVEILTRLPAKSLMKFKCVSKLWSSIIHNQSFIDSF) is the F-box domain.

The chain is F-box protein At1g30790 from Arabidopsis thaliana (Mouse-ear cress).